The sequence spans 217 residues: Thiamine-phosphate synthase (217 aa).

Residues 39–43 (QLRRK) and N71 each bind 4-amino-2-methyl-5-(diphosphooxymethyl)pyrimidine. Mg(2+) is bound by residues D72 and D91. A 4-amino-2-methyl-5-(diphosphooxymethyl)pyrimidine-binding site is contributed by S110. Residue 137–139 (SPT) coordinates 2-[(2R,5Z)-2-carboxy-4-methylthiazol-5(2H)-ylidene]ethyl phosphate. Residue K140 participates in 4-amino-2-methyl-5-(diphosphooxymethyl)pyrimidine binding. Residues G173 and 193 to 194 (IS) contribute to the 2-[(2R,5Z)-2-carboxy-4-methylthiazol-5(2H)-ylidene]ethyl phosphate site.

This sequence belongs to the thiamine-phosphate synthase family. It depends on Mg(2+) as a cofactor.

The catalysed reaction is 2-[(2R,5Z)-2-carboxy-4-methylthiazol-5(2H)-ylidene]ethyl phosphate + 4-amino-2-methyl-5-(diphosphooxymethyl)pyrimidine + 2 H(+) = thiamine phosphate + CO2 + diphosphate. The enzyme catalyses 2-(2-carboxy-4-methylthiazol-5-yl)ethyl phosphate + 4-amino-2-methyl-5-(diphosphooxymethyl)pyrimidine + 2 H(+) = thiamine phosphate + CO2 + diphosphate. It carries out the reaction 4-methyl-5-(2-phosphooxyethyl)-thiazole + 4-amino-2-methyl-5-(diphosphooxymethyl)pyrimidine + H(+) = thiamine phosphate + diphosphate. It functions in the pathway cofactor biosynthesis; thiamine diphosphate biosynthesis; thiamine phosphate from 4-amino-2-methyl-5-diphosphomethylpyrimidine and 4-methyl-5-(2-phosphoethyl)-thiazole: step 1/1. Its function is as follows. Condenses 4-methyl-5-(beta-hydroxyethyl)thiazole monophosphate (THZ-P) and 2-methyl-4-amino-5-hydroxymethyl pyrimidine pyrophosphate (HMP-PP) to form thiamine monophosphate (TMP). This is Thiamine-phosphate synthase from Bordetella bronchiseptica (strain ATCC BAA-588 / NCTC 13252 / RB50) (Alcaligenes bronchisepticus).